A 263-amino-acid chain; its full sequence is Putative inactive caspase B (263 aa).

A propeptide spans 1–8 (MMCEDASD) (removed in mature form by cps-1 or ced-3).

The protein belongs to the peptidase C14A family. Interacts with ced-3 (via large subunit p17 or small subunit p13); the interaction inhibits ced-3 autoactivation. In terms of processing, cleavage by csp-1 isoform b or ced-3 removes the propeptide and generates subunit p31 in vitro. An additional cleavage at Asp-149 generates the 2 subunits p17 and p14 but this cleavage appears to be less efficient. In terms of tissue distribution, specifically expressed in the hermaphrodite germline.

The protein resides in the cytoplasm. Putative inactive caspase. In the germline, binds caspase ced-3 zymogen and prevents ced-3 autoactivation. Does not affect the caspase activity of mature ced-3 and ced-4-mediated mature ced-3 activation. Negatively regulates germline apoptosis by inhibiting autocleavage of caspase ced-3. Involved in fertility. In terms of biological role, putative inactive caspase. Dispensable for the inhibition of germline apoptosis. The chain is Putative inactive caspase B from Caenorhabditis elegans.